The primary structure comprises 276 residues: Large ribosomal subunit protein uL2 (276 aa).

The interval 223-276 (VVMNPVDHPHGGGEGKSSGGRHPVSPWGKKTRGPKTRNNKVTDRLIIRRRNAKR) is disordered. Residues 251-260 (KKTRGPKTRN) are compositionally biased toward basic residues.

Belongs to the universal ribosomal protein uL2 family. In terms of assembly, part of the 50S ribosomal subunit. Forms a bridge to the 30S subunit in the 70S ribosome.

One of the primary rRNA binding proteins. Required for association of the 30S and 50S subunits to form the 70S ribosome, for tRNA binding and peptide bond formation. It has been suggested to have peptidyltransferase activity; this is somewhat controversial. Makes several contacts with the 16S rRNA in the 70S ribosome. This chain is Large ribosomal subunit protein uL2, found in Hyphomonas neptunium (strain ATCC 15444).